A 106-amino-acid chain; its full sequence is MVIKVFLASSSSFVTIKKRQQEVLQFLEANRIEYEEVDITMLEEMRQWMYKNIPKDRLPGQGNPLPPQIFNDNAYCGDYESFFESKESNTVFLFLQLKARPAQKEL.

The SH3-binding motif lies at 61–67 (QGNPLPP).

It belongs to the SH3BGR family.

The protein localises to the nucleus. The polypeptide is SH3 domain-binding glutamic acid-rich-like protein 2-A (sh3bgrl2-a) (Xenopus laevis (African clawed frog)).